We begin with the raw amino-acid sequence, 217 residues long: Carboxylesterase Culp1 (217 aa).

An N-terminal signal peptide occupies residues 1 to 32 (MTPRSLVRIVGVVVATTLALVSAPAGGRAAHA). A disulfide bridge links Cys-35 with Cys-107. Ser-118 functions as the Nucleophile in the catalytic mechanism. Cys-177 and Cys-184 form a disulfide bridge. The active site involves Asp-181. The active-site Proton donor/acceptor is His-193.

Belongs to the cutinase family.

Its subcellular location is the secreted. The catalysed reaction is a fatty acid ester + H2O = an aliphatic alcohol + a fatty acid + H(+). In terms of biological role, shows esterase activity, with a preference for short- and medium-chain fatty acids. This Mycobacterium bovis (strain ATCC BAA-935 / AF2122/97) protein is Carboxylesterase Culp1.